The chain runs to 78 residues: Putative membrane protein insertion efficiency factor (78 aa).

The protein belongs to the UPF0161 family.

Its subcellular location is the cell membrane. In terms of biological role, could be involved in insertion of integral membrane proteins into the membrane. This Limosilactobacillus reuteri (strain DSM 20016) (Lactobacillus reuteri) protein is Putative membrane protein insertion efficiency factor.